Reading from the N-terminus, the 492-residue chain is V-type proton ATPase subunit B 2 (492 aa).

Belongs to the ATPase alpha/beta chains family. As to quaternary structure, V-ATPase is a heteromultimeric enzyme composed of a peripheral catalytic V1 complex (main components: subunits A, B, C, D, E, and F) attached to an integral membrane V0 proton pore complex (main component: the proteolipid protein).

Functionally, non-catalytic subunit of the peripheral V1 complex of vacuolar ATPase. V-ATPase is responsible for acidifying a variety of intracellular compartments in eukaryotic cells. The sequence is that of V-type proton ATPase subunit B 2 from Acetabularia acetabulum (Mermaid's wine glass).